Consider the following 438-residue polypeptide: MLRESDGEMSLGTTNSPISSGTESCSSFSRLSFDAPPSTIPEEESFLSLKPHRSSDFAYAEIRRRKKQGLTFRDFRLMRRIGAGDIGTVYLCRLAGDEEESRSSYFAMKVVDKEALALKKKMHRAEMEKTILKMLDHPFLPTLYAEFEASHFSCIVMEYCSGGDLHSLRHRQPHRRFSLSSARFYAAEVLVALEYLHMLGIIYRDLKPENILVRSDGHIMLSDFDLSLCSDSIAAVESSSSSPENQQLRSPRRFTRLARLFQRVLRSKKVQTLEPTRLFVAEPVTARSGSFVGTHEYVAPEVASGGSHGNAVDWWAFGVFLYEMIYGKTPFVAPTNDVILRNIVKRQLSFPTDSPATMFELHARNLISGLLNKDPTKRLGSRRGAAEVKVHPFFKGLNFALIRTLTPPEIPSSVVKKPMKSATFSGRSSNKPAAFDYF.

A disordered region spans residues 1–24; that stretch reads MLRESDGEMSLGTTNSPISSGTES. The span at 11 to 24 shows a compositional bias: polar residues; it reads LGTTNSPISSGTES. A Protein kinase domain is found at 75-394; sequence FRLMRRIGAG…AAEVKVHPFF (320 aa). ATP is bound by residues 81 to 89 and Lys-109; that span reads IGAGDIGTV. The active-site Proton acceptor is Asp-205. The region spanning 395 to 438 is the AGC-kinase C-terminal domain; that stretch reads KGLNFALIRTLTPPEIPSSVVKKPMKSATFSGRSSNKPAAFDYF.

This sequence belongs to the protein kinase superfamily. Ser/Thr protein kinase family. As to quaternary structure, interacts with PDK1, CML12 and PBP1. Component of a complex made of PINs (e.g. PIN1 and PIN2), MAB4/MELs (e.g. NPY1/MAB4 and NPY5/MEL1) and AGC kinases (e.g. D6PK and PID) at the plasma membrane. Binds directly to PIN2, NPY1/MAB4 and NPY5/MEL1. In terms of processing, autophosphorylated. Phosphorylated by PDK1. Expressed in root hair cells, shoot xylem parenchyma cells and endodermis around the vasculature. Expressed in anther primordia, vasculature of the growing flower stalk, young pedicels and bracts and developing sepals, but not in petals. In pistils, transiently expressed in the vasculature of the style and the septum, and in the integuments and funiculus of the developing ovule.

It is found in the cytoplasm. The protein localises to the cytosol. Its subcellular location is the cell membrane. The enzyme catalyses L-seryl-[protein] + ATP = O-phospho-L-seryl-[protein] + ADP + H(+). It catalyses the reaction L-threonyl-[protein] + ATP = O-phospho-L-threonyl-[protein] + ADP + H(+). With respect to regulation, activated by magnesium and PDK1. Inhibited by staurosporine. Repressed by calcium. Its function is as follows. Serine/threonine-protein kinase involved in the regulation of auxin signaling. Acts as a positive regulator of cellular auxin efflux and regulates organ development by enhancing polar auxin transport. Phosphorylates conserved serine residues in the PIN auxin efflux carriers. Phosphorylation of PIN proteins is required and sufficient for apical-basal PIN polarity that enables directional intercellular auxin fluxes, which mediate differential growth, tissue patterning and organogenesis. Phosphorylates PIN proteins (e.g. PIN1 and PIN2), especially when NPY proteins (e.g. NPY1/MAB4 and NPY5/MEL1) are recruited at the plasma membrane; this enhances the polarized localizations (apical or basal) of PINs in the cell by limiting their lateral diffusion-based escape. Acts in association with PIN1 to control the establishment of bilateral symmetry and promotion of cotyledon outgrowth. Regulates root gravitropism through modulation of PIN2-dependent basipetal auxin transport. Required for polarization of PIN3-dependent auxin transport for hypocotyl gravitropic response. The protein kinase activity of PID is essential for its auxin efflux regulatory function. PID kinase and PP2A phosphatase activities antagonistically regulate phosphorylation of PIN proteins, affecting PIN sorting. The polypeptide is Protein kinase PINOID (Arabidopsis thaliana (Mouse-ear cress)).